The sequence spans 630 residues: Chaperone protein HtpG (630 aa).

An a; substrate-binding region spans residues 1-339 (MSHTETHAFQ…SNDLPLNVSR (339 aa)). The tract at residues 340–556 (EILQSNRVVD…EGDISAHMAR (217 aa)) is b. A c region spans residues 557-630 (MMEQMGQAMP…RMNALLSEVI (74 aa)).

It belongs to the heat shock protein 90 family. Homodimer.

Its subcellular location is the cytoplasm. In terms of biological role, molecular chaperone. Has ATPase activity. The polypeptide is Chaperone protein HtpG (Hydrogenovibrio crunogenus (strain DSM 25203 / XCL-2) (Thiomicrospira crunogena)).